The chain runs to 825 residues: MAAAAFEVPAALTTSESTMAAERAAAPVQAVEPTPASPWTQRTAHDIGGPRTRTGDVVLAEPADFESLLLSRPVLEGLRAAGFERPSPVQLKAIPLGRCGLDLIVQAKSGTGKTCVFSTIALDSLILENYSTQILILAPTREIAVQIHSVITAIGIKMEGLECHVFIGGTPLSQDKTRLKKCHIAVGSPGRIKQLIELDYLNPGSIRLFILDEADKLLEEGSFQEQINWIYSSLPASKQMLAVSATYPEVLANALTRYMRDPTFVRLNPSDPSLIGLKQYYQVVNSYPLAHKIFEEKTQHLQELFSKVPFNQALVFSNLHSRAQHLADILSSKGFPTECISGNMNQNQRLDAMAKLKQFHCRVLISTDLTSRGIDAEKVNLVVNLDVPLDWETYMHRIGRAGRFGTLGLTVTYCCRGEEENMMMKIAQKCNINLLPLPDPIPPGLMEECLNWDVEVKAAMHTYSSPTVATQSPKKQVQKLERAFQSQRTPGNQTPSPRNTSASALSARPKHSKPKLPVKSHSECGVLEKAAPPQESGCPAQLEEQVKNSVQTSVEDSSSNSQHQAKDSSPGSLPKIPCLSSFKVHQPSTLTFAELVDDYEHYIKEGLEKPVEIIRHYTGPEAQTGNPQNGFVRNRVSEDRAQMLVSSSQSGDSESDSDSCSSRTSSQSKGNKSYLEGSSDTQLKDTECTPVGGPLSLEQVQNGNDTPTQVEYQEAPETQVKARHKEGANQRSKQSRRNPARRSSYRVQSEPQEESWYDCHRETTASFSDTYQDYEEYWRAYYRAWQEYYAAASHSYYWNAQRHPSWMAAYHMNTVYLQEMMRGNQ.

The tract at residues 27–50 is disordered; it reads PVQAVEPTPASPWTQRTAHDIGGP. Residues 63–91 carry the Q motif motif; that stretch reads ADFESLLLSRPVLEGLRAAGFERPSPVQL. ATP contacts are provided by residues arginine 85, glutamine 90, 107-114, and 110-115; these read AKSGTGKT and GTGKTC. Residues 94-265 enclose the Helicase ATP-binding domain; that stretch reads IPLGRCGLDL…TRYMRDPTFV (172 aa). Phosphoserine is present on serine 188. The DEAD box motif lies at 212–215; the sequence is DEAD. Residue serine 270 is modified to Phosphoserine. In terms of domain architecture, Helicase C-terminal spans 300 to 449; that stretch reads HLQELFSKVP…PIPPGLMEEC (150 aa). Polar residues-rich tracts occupy residues 465–475 and 484–504; these read SPTVATQSPKK and FQSQ…SASA. 2 disordered regions span residues 465-573 and 642-753; these read SPTV…PGSL and QMLV…EPQE. Phosphoserine occurs at positions 472, 501, and 506. A compositionally biased stretch (basic residues) spans 508 to 518; sequence RPKHSKPKLPV. Over residues 547-571 the composition is skewed to polar residues; that stretch reads KNSVQTSVEDSSSNSQHQAKDSSPG. Threonine 552 carries the post-translational modification Phosphothreonine. Phosphoserine occurs at positions 561, 653, 655, 657, 673, 678, and 679. Residues 646-668 are compositionally biased toward low complexity; it reads SSSQSGDSESDSDSCSSRTSSQS. Residues threonine 689 and threonine 706 each carry the phosphothreonine modification. The segment covering 698-711 has biased composition (polar residues); the sequence is EQVQNGNDTPTQVE. Over residues 733–744 the composition is skewed to basic residues; sequence KQSRRNPARRSS.

It belongs to the DEAD box helicase family. DDX20 subfamily. In terms of assembly, part of the core SMN complex that contains SMN1, GEMIN2/SIP1, DDX20/GEMIN3, GEMIN4, GEMIN5, GEMIN6, GEMIN7, GEMIN8 and STRAP/UNRIP. Part of the SMN-Sm complex that contains SMN1, GEMIN2/SIP1, DDX20/GEMIN3, GEMIN4, GEMIN5, GEMIN6, GEMIN7, GEMIN8, STRAP/UNRIP and the Sm proteins SNRPB, SNRPD1, SNRPD2, SNRPD3, SNRPE, SNRPF and SNRPG. Interacts with SMN1; the interaction is direct. Interacts with GEMIN4; the interaction is direct. Interacts with GEMIN5. Interacts with SNUPN; the interaction is direct. Interacts with PPP4R2. Interacts with FOXL2. Interacts with NANOS1 and PUM2.

Its subcellular location is the cytoplasm. It localises to the nucleus. The protein resides in the gem. The enzyme catalyses ATP + H2O = ADP + phosphate + H(+). The catalysed reaction is a ribonucleoside 5'-triphosphate + H2O = a ribonucleoside 5'-diphosphate + phosphate + H(+). In terms of biological role, the SMN complex catalyzes the assembly of small nuclear ribonucleoproteins (snRNPs), the building blocks of the spliceosome, and thereby plays an important role in the splicing of cellular pre-mRNAs. Most spliceosomal snRNPs contain a common set of Sm proteins SNRPB, SNRPD1, SNRPD2, SNRPD3, SNRPE, SNRPF and SNRPG that assemble in a heptameric protein ring on the Sm site of the small nuclear RNA to form the core snRNP (Sm core). In the cytosol, the Sm proteins SNRPD1, SNRPD2, SNRPE, SNRPF and SNRPG are trapped in an inactive 6S pICln-Sm complex by the chaperone CLNS1A that controls the assembly of the core snRNP. To assemble core snRNPs, the SMN complex accepts the trapped 5Sm proteins from CLNS1A forming an intermediate. Binding of snRNA inside 5Sm triggers eviction of the SMN complex, thereby allowing binding of SNRPD3 and SNRPB to complete assembly of the core snRNP. May also play a role in the metabolism of small nucleolar ribonucleoprotein (snoRNPs). The sequence is that of Probable ATP-dependent RNA helicase DDX20 (Ddx20) from Mus musculus (Mouse).